The chain runs to 155 residues: MVRVVATGTFDIIHPGHIRFLEEAKKLGDELIVIVAREKNVRHKPKPIIPEEQRVRVVSALKPVDKAILGDEHDIFKPIMELKPDIIALGYDQHFDEKKLEEELRKRGLNTRVVRIKAKEECEYCSSTKIIKRIVDVVKSRLQEYEEFFRSRGML.

Residues 9-10 (TF), 14-17 (HPGH), and D92 each bind ATP.

It belongs to the archaeal FAD synthase family. As to quaternary structure, homodimer. The cofactor is a divalent metal cation.

The catalysed reaction is FMN + ATP + H(+) = FAD + diphosphate. The protein operates within cofactor biosynthesis; FAD biosynthesis; FAD from FMN: step 1/1. Its function is as follows. Catalyzes the transfer of the AMP portion of ATP to flavin mononucleotide (FMN) to produce flavin adenine dinucleotide (FAD) coenzyme. This chain is FAD synthase, found in Archaeoglobus profundus (strain DSM 5631 / JCM 9629 / NBRC 100127 / Av18).